Consider the following 462-residue polypeptide: Ribosomal protein uS12 methylthiotransferase RimO (462 aa).

The MTTase N-terminal domain occupies 10–125 (PRIGMVSLGC…VLDAVHRNLP (116 aa)). C19, C55, C84, C160, C164, and C167 together coordinate [4Fe-4S] cluster. A Radical SAM core domain is found at 146–388 (LTPRHYAYLK…AVAEALSSAK (243 aa)). A TRAM domain is found at 390–462 (QRRVGATMQV…RGHDLLAQPI (73 aa)).

It belongs to the methylthiotransferase family. RimO subfamily. [4Fe-4S] cluster is required as a cofactor.

It localises to the cytoplasm. The enzyme catalyses L-aspartate(89)-[ribosomal protein uS12]-hydrogen + (sulfur carrier)-SH + AH2 + 2 S-adenosyl-L-methionine = 3-methylsulfanyl-L-aspartate(89)-[ribosomal protein uS12]-hydrogen + (sulfur carrier)-H + 5'-deoxyadenosine + L-methionine + A + S-adenosyl-L-homocysteine + 2 H(+). In terms of biological role, catalyzes the methylthiolation of an aspartic acid residue of ribosomal protein uS12. This chain is Ribosomal protein uS12 methylthiotransferase RimO, found in Verminephrobacter eiseniae (strain EF01-2).